A 209-amino-acid chain; its full sequence is Ribosome maturation factor RimP (209 aa).

This sequence belongs to the RimP family.

It localises to the cytoplasm. Required for maturation of 30S ribosomal subunits. The sequence is that of Ribosome maturation factor RimP from Bartonella bacilliformis (strain ATCC 35685 / KC583 / Herrer 020/F12,63).